The following is a 456-amino-acid chain: Shufflon protein D' (456 aa).

Residues 1-361 (MKKYDRGWAS…TGAILSCQSG (361 aa)) are constant region. The variable region stretch occupies residues 362-456 (TWRKSNSGST…KCSYVVACQN (95 aa)).

The chain is Shufflon protein D' from Escherichia coli.